Here is a 124-residue protein sequence, read N- to C-terminus: Biogenesis of lysosome-related organelles complex 1 subunit CNL1 (124 aa).

A disordered region spans residues 1–20 (MMSENITAVEPQENNDVEAD). A coiled-coil region spans residues 75-98 (IGMAKDLLQKCDDLEKHYDQLDAV).

Belongs to the BLOC1S4 family. As to quaternary structure, component of the biogenesis of lysosome-related organelles complex-1 (BLOC-1).

The protein localises to the cytoplasm. In terms of biological role, component of the biogenesis of lysosome-related organelles complex-1 (BLOC-1), a complex that is involved in endosomal cargo sorting. The protein is Biogenesis of lysosome-related organelles complex 1 subunit CNL1 (CLN1) of Kluyveromyces lactis (strain ATCC 8585 / CBS 2359 / DSM 70799 / NBRC 1267 / NRRL Y-1140 / WM37) (Yeast).